Consider the following 83-residue polypeptide: Turripeptide Lol11.2 (83 aa).

A signal peptide spans 1–27; the sequence is MARLMMTVGCLIFIVVLLDMMVPVSNT.

The protein belongs to the conopeptide I2-like superfamily. Contains 4 disulfide bonds. Expressed by the venom duct.

Its subcellular location is the secreted. In terms of biological role, acts as a neurotoxin by inhibiting voltage-gated potassium channels (Kv). The chain is Turripeptide Lol11.2 from Iotyrris olangoensis (Sea snail).